Consider the following 238-residue polypeptide: Small ribosomal subunit protein uS2 (238 aa).

This sequence belongs to the universal ribosomal protein uS2 family.

The protein is Small ribosomal subunit protein uS2 of Prochlorococcus marinus (strain MIT 9211).